The primary structure comprises 162 residues: Disulfide bond formation protein B (162 aa).

Over 1-8 the chain is Cytoplasmic; that stretch reads MTPLFRKA. Residues 9–25 traverse the membrane as a helical segment; sequence VWLLFAVSVCAFAGSLA. At 26–43 the chain is on the periplasmic side; sequence AQYVLGMEPCVLCISQRL. A disulfide bridge connects residues Cys-35 and Cys-38. Residues 44–60 form a helical membrane-spanning segment; sequence CVLATALCAAVVLACKP. The Cytoplasmic segment spans residues 61-67; that stretch reads KGRVGGL. Residues 68–85 traverse the membrane as a helical segment; sequence SGAVFISIPAVTGISVAA. Residues 86–141 are Periplasmic-facing; the sequence is YQLWLQSLPPGAAPSCGAPWTFRLKGWPLFDWFEPVVRGFGNCAEPDYLLGVALPV. Residues Cys-101 and Cys-128 are joined by a disulfide bond. A helical transmembrane segment spans residues 142-160; that stretch reads WSAAYFLAVVLTVWWAWAR. The Cytoplasmic portion of the chain corresponds to 161-162; that stretch reads AK.

Belongs to the DsbB family.

Its subcellular location is the cell inner membrane. Required for disulfide bond formation in some periplasmic proteins. Acts by oxidizing the DsbA protein. This Neisseria gonorrhoeae (strain ATCC 700825 / FA 1090) protein is Disulfide bond formation protein B.